The sequence spans 333 residues: D-lactate dehydrogenase (333 aa).

Residues 156–157 (HI), aspartate 176, 207–208 (VP), asparagine 213, 234–236 (VSR), and aspartate 260 contribute to the NAD(+) site. Arginine 236 is an active-site residue. Glutamate 265 is a catalytic residue. Histidine 297 functions as the Proton donor in the catalytic mechanism.

It belongs to the D-isomer specific 2-hydroxyacid dehydrogenase family. As to quaternary structure, homodimer.

The enzyme catalyses (R)-lactate + NAD(+) = pyruvate + NADH + H(+). This chain is D-lactate dehydrogenase (ldhA), found in Lactobacillus delbrueckii subsp. bulgaricus (strain ATCC 11842 / DSM 20081 / BCRC 10696 / JCM 1002 / NBRC 13953 / NCIMB 11778 / NCTC 12712 / WDCM 00102 / Lb 14).